The sequence spans 810 residues: Plasminogen (810 aa).

A signal peptide spans 1-19 (MEHKEVVLLLLLFLKSGQG). In terms of domain architecture, PAN spans 20–98 (EPLDDYVNTQ…RDVVLFEKKV (79 aa)). Cystine bridges form between Cys49/Cys73, Cys53/Cys61, Cys103/Cys181, Cys124/Cys164, Cys152/Cys176, Cys185/Cys262, Cys188/Cys316, Cys206/Cys245, Cys234/Cys257, Cys275/Cys352, Cys296/Cys335, and Cys324/Cys347. Kringle domains are found at residues 103–181 (CKTG…ILEC) and 184–262 (ECMH…IPRC). Residues 126–145 (KWSSTSPHRPRFSPATHPSE) are disordered. L-lysine contacts are provided by Arg136, Asp158, and Arg172. A glycan (O-linked (GalNAc...) serine) is linked at Ser268. A Kringle 3 domain is found at 275 to 352 (CLKGTGENYR…RWEYCKIPSC (78 aa)). N-linked (GlcNAc...) asparagine glycosylation is present at Asn308. Thr365 is a glycosylation site (O-linked (GalNAc...) threonine). 9 disulfides stabilise this stretch: Cys377–Cys454, Cys398–Cys437, Cys426–Cys449, Cys481–Cys560, Cys502–Cys543, Cys531–Cys555, Cys567–Cys685, Cys577–Cys585, and Cys607–Cys623. Kringle domains are found at residues 377–454 (CYHG…LKKC) and 481–560 (CMFG…VPQC). Residues 396-416 (KKCQSWSSMTPHRHQKTPENY) are disordered. Residues Asp432 and Arg445 each coordinate L-lysine. One can recognise a Peptidase S1 domain in the interval 581–808 (VVGGCVAHPH…FVTWIEGVMR (228 aa)). Position 597 is a phosphoserine (Ser597). Active-site charge relay system residues include His622 and Asp665. Phosphoserine is present on Ser688. Intrachain disulfides connect Cys699–Cys766, Cys729–Cys745, and Cys756–Cys784. The Charge relay system role is filled by Ser760.

Belongs to the peptidase S1 family. Plasminogen subfamily. Interacts (both mature PLG and the angiostatin peptide) with CSPG4 and AMOT. Interacts (via the Kringle domains) with HRG; the interaction tethers PLG to the cell surface and enhances its activation. Interacts (via Kringle 4 domain) with ADA; the interaction stimulates PLG activation when in complex with DPP4. Angiostatin: Interacts with ATP5F1A; the interaction inhibits most of the angiogenic effects of angiostatin. Interacts (plasmin) with iripin-8, a serine protease inhibitor from Ixodes ricinus saliva. Interacts (plasmin) with iripin-1, a serine protease inhibitor from Ixodes ricinus saliva. Interacts (plasmin) with Kazal-type trypsin inhibitor, a serine protease inhibitor from Aedes aegypti. In terms of assembly, (Microbial infection) Interacts with C.albicans GPD2; the interaction is direct and provides active plasmin on the surface of fungal cells. As to quaternary structure, (Microbial infection) Interacts with Staphylococcus aureus protein FnbB; this interaction provides active plasmin on the surface of bacterial cells. (Microbial infection) Interacts with P.falciparum (strain NF54) enolase ENO (via DKSLVK motif); the interaction occurs at the ookinete cell surface and is required for ookinete invasion of the mosquito midgut. In terms of assembly, (Microbial infection) Interacts with B.burgdorferi OspC. In terms of processing, N-linked glycan contains N-acetyllactosamine and sialic acid. O-linked glycans consist of Gal-GalNAc disaccharide modified with up to 2 sialic acid residues (microheterogeneity). In the presence of the inhibitor, the activation involves only cleavage after Arg-580, yielding two chains held together by two disulfide bonds. In the absence of the inhibitor, the activation involves additionally the removal of the activation peptide. Post-translationally, (Microbial infection) The Y.pestis Pla protein cleaves between Arg-580 and Val-581, generating plasmin which facilitates bacterial migration and infection. In terms of tissue distribution, present in plasma and many other extracellular fluids. It is synthesized in the liver.

The protein localises to the secreted. It catalyses the reaction Preferential cleavage: Lys-|-Xaa &gt; Arg-|-Xaa, higher selectivity than trypsin. Converts fibrin into soluble products.. Converted into plasmin by plasminogen activators, both plasminogen and its activator being bound to fibrin. Activated with catalytic amounts of streptokinase. Plasmin activity inhibited by SERPINE2. Functionally, plasmin dissolves the fibrin of blood clots and acts as a proteolytic factor in a variety of other processes including embryonic development, tissue remodeling, tumor invasion, and inflammation. In ovulation, weakens the walls of the Graafian follicle. It activates the urokinase-type plasminogen activator, collagenases and several complement zymogens, such as C1, C4 and C5. Cleavage of fibronectin and laminin leads to cell detachment and apoptosis. Also cleaves fibrin, thrombospondin and von Willebrand factor. Its role in tissue remodeling and tumor invasion may be modulated by CSPG4. Binds to cells. Angiostatin is an angiogenesis inhibitor that blocks neovascularization and growth of experimental primary and metastatic tumors in vivo. Its function is as follows. (Microbial infection) ENO/enoloase from parasite P.falciparum (strain NF54) interacts with PLG present in the mosquito blood meal to promote the invasion of the mosquito midgut by the parasite ookinete. The catalytic active form, plasmin, is essential for the invasion of the mosquito midgut. In terms of biological role, (Microbial infection) Binds to OspC on the surface of B.burgdorferi cells, possibly conferring an extracellular protease activity on the bacteria that allows it to traverse host tissue. Functionally, (Microbial infection) Interacts with dengue virus type 2 particles. Enhances dengue virus type 2 infection in Aedes aegypti mosquito midgut by increasing midgut internalization, resulting in higher infection rates and viral dissemination in mosquitoes. In Homo sapiens (Human), this protein is Plasminogen (PLG).